Consider the following 430-residue polypeptide: sn-glycerol-3-phosphate-binding periplasmic protein UgpB (430 aa).

An N-terminal signal peptide occupies residues 1-20 (MRLISISTTIAFGFAFQAQA). Sn-glycerol 3-phosphate contacts are provided by Tyr-62, Asp-86, Ser-141, Ser-268, Gly-302, Tyr-341, and Arg-392.

The protein belongs to the bacterial solute-binding protein 1 family. As to quaternary structure, the complex is composed of two ATP-binding proteins (UgpC), two transmembrane proteins (UgpA and UgpE) and a solute-binding protein (UgpB).

Its subcellular location is the periplasm. Its function is as follows. Part of the ABC transporter complex UgpBAEC involved in sn-glycerol-3-phosphate (G3P) import. Binds G3P. The sequence is that of sn-glycerol-3-phosphate-binding periplasmic protein UgpB (ugpB) from Rhizobium meliloti (strain 1021) (Ensifer meliloti).